The primary structure comprises 300 residues: 4-hydroxybenzoate octaprenyltransferase (300 aa).

8 helical membrane-spanning segments follow: residues 32 to 52, 55 to 75, 108 to 128, 149 to 169, 178 to 198, 222 to 242, 246 to 266, and 278 to 298; these read IGTYLLLWPTLWALWLASEGA, LKNLFIFVFGVLLMRSAGCVI, LFGILVGVSFILVLFTNALTI, YLPQVVLGAAFAWGIPMAFAA, AWLLYTATVVWTVAYDTMYAM, AAVAGLQVLTLGVLFMVGAQH, VYYQVSLIIVAVLFVYQQHLI, and FLNNHWVGAAVFLGLVLEFLF.

Belongs to the UbiA prenyltransferase family. Mg(2+) serves as cofactor.

It localises to the cell inner membrane. The enzyme catalyses all-trans-octaprenyl diphosphate + 4-hydroxybenzoate = 4-hydroxy-3-(all-trans-octaprenyl)benzoate + diphosphate. It functions in the pathway cofactor biosynthesis; ubiquinone biosynthesis. Its function is as follows. Catalyzes the prenylation of para-hydroxybenzoate (PHB) with an all-trans polyprenyl group. Mediates the second step in the final reaction sequence of ubiquinone-8 (UQ-8) biosynthesis, which is the condensation of the polyisoprenoid side chain with PHB, generating the first membrane-bound Q intermediate 3-octaprenyl-4-hydroxybenzoate. The protein is 4-hydroxybenzoate octaprenyltransferase of Hahella chejuensis (strain KCTC 2396).